The following is a 200-amino-acid chain: Ependymin-related protein 1 (200 aa).

Positions Met-1 to Gly-17 are cleaved as a signal peptide. N-linked (GlcNAc...) asparagine glycosylation is found at Asn-36, Asn-124, and Asn-136.

This sequence belongs to the ependymin family. Component of the acid-soluble and acid-insoluble organic matrix of prismatic shell layers (at protein level). Expressed discontinuously in the anterior zone of the outer fold of the mantle where its expression correlates with shell pigmentation.

It localises to the secreted. The polypeptide is Ependymin-related protein 1 (Haliotis asinina (Donkey's ear abalone)).